A 368-amino-acid polypeptide reads, in one-letter code: uncharacterized protein (368 aa).

Residues 156-182 (SNVNAHNNNNNSNNNNNNNNNSNNNNN) show a composition bias toward low complexity. Disordered regions lie at residues 156–213 (SNVN…SSPY), 228–259 (ASTNLSSSSSNNSMHTNPTTATSTSADLINDL), and 291–319 (STTSSSIGTNINPPQHSPSPSQREDFSTA). The segment covering 183–194 (LYNQTQFSTRYF) has biased composition (polar residues). Composition is skewed to low complexity over residues 195 to 213 (NSNSSPSLTSSTSNSSSPY) and 228 to 240 (ASTNLSSSSSNNS). Composition is skewed to polar residues over residues 241–254 (MHTNPTTATSTSAD) and 297–311 (IGTNINPPQHSPSPS).

This is an uncharacterized protein from Saccharomyces cerevisiae (strain ATCC 204508 / S288c) (Baker's yeast).